The primary structure comprises 200 residues: 3-isopropylmalate dehydratase small subunit (200 aa).

The protein belongs to the LeuD family. LeuD type 1 subfamily. In terms of assembly, heterodimer of LeuC and LeuD.

It catalyses the reaction (2R,3S)-3-isopropylmalate = (2S)-2-isopropylmalate. It participates in amino-acid biosynthesis; L-leucine biosynthesis; L-leucine from 3-methyl-2-oxobutanoate: step 2/4. Functionally, catalyzes the isomerization between 2-isopropylmalate and 3-isopropylmalate, via the formation of 2-isopropylmaleate. The chain is 3-isopropylmalate dehydratase small subunit from Arthrobacter sp. (strain FB24).